Reading from the N-terminus, the 292-residue chain is Glyoxylase B2 (292 aa).

6 residues coordinate Zn(2+): His-72, His-74, Asp-76, His-77, His-148, and Asp-166. Substrate is bound by residues 175-181 (TARCDFP), 208-210 (HDY), and 284-287 (KIPL). Zn(2+) is bound at residue His-208.

The protein belongs to the metallo-beta-lactamase superfamily. Glyoxalase II family. The cofactor is Zn(2+).

This Dictyostelium discoideum (Social amoeba) protein is Glyoxylase B2 (gloB2).